Consider the following 293-residue polypeptide: Protein translocase subunit SecF (293 aa).

A run of 6 helical transmembrane segments spans residues 10-30, 130-150, 158-178, 185-205, 244-264, and 267-287; these read ARIF…SMFA, VKSA…YITI, LAAI…FSVL, SFVA…IVVF, LFAV…FSFA, and VGFC…WLFF.

Belongs to the SecD/SecF family. SecF subfamily. As to quaternary structure, forms a complex with SecD. Part of the essential Sec protein translocation apparatus which comprises SecA, SecYEG and auxiliary proteins SecDF. Other proteins may also be involved.

The protein resides in the cell membrane. Functionally, part of the Sec protein translocase complex. Interacts with the SecYEG preprotein conducting channel. SecDF uses the proton motive force (PMF) to complete protein translocation after the ATP-dependent function of SecA. The polypeptide is Protein translocase subunit SecF (Acidaminococcus fermentans (strain ATCC 25085 / DSM 20731 / CCUG 9996 / CIP 106432 / VR4)).